The following is a 424-amino-acid chain: Serine--tRNA ligase (424 aa).

An L-serine-binding site is contributed by 233–235; that stretch reads TAE. 264–266 is a binding site for ATP; the sequence is RRE. Glu287 provides a ligand contact to L-serine. Position 351 to 354 (351 to 354) interacts with ATP; the sequence is EISS. Ser387 is a binding site for L-serine.

Belongs to the class-II aminoacyl-tRNA synthetase family. Type-1 seryl-tRNA synthetase subfamily. Homodimer. The tRNA molecule binds across the dimer.

Its subcellular location is the cytoplasm. It catalyses the reaction tRNA(Ser) + L-serine + ATP = L-seryl-tRNA(Ser) + AMP + diphosphate + H(+). The catalysed reaction is tRNA(Sec) + L-serine + ATP = L-seryl-tRNA(Sec) + AMP + diphosphate + H(+). Its pathway is aminoacyl-tRNA biosynthesis; selenocysteinyl-tRNA(Sec) biosynthesis; L-seryl-tRNA(Sec) from L-serine and tRNA(Sec): step 1/1. In terms of biological role, catalyzes the attachment of serine to tRNA(Ser). Is also able to aminoacylate tRNA(Sec) with serine, to form the misacylated tRNA L-seryl-tRNA(Sec), which will be further converted into selenocysteinyl-tRNA(Sec). The chain is Serine--tRNA ligase from Acaryochloris marina (strain MBIC 11017).